The chain runs to 408 residues: Acetate kinase (408 aa).

Asn-10 contributes to the Mg(2+) binding site. ATP is bound at residue Lys-17. Arg-96 contacts substrate. The Proton donor/acceptor role is filled by Asp-153. ATP-binding positions include 213 to 217 (HLGNG) and 288 to 290 (DLR). Mg(2+) is bound at residue Glu-393.

This sequence belongs to the acetokinase family. As to quaternary structure, homodimer. Requires Mg(2+) as cofactor. Mn(2+) serves as cofactor.

It is found in the cytoplasm. The catalysed reaction is acetate + ATP = acetyl phosphate + ADP. It participates in metabolic intermediate biosynthesis; acetyl-CoA biosynthesis; acetyl-CoA from acetate: step 1/2. Functionally, catalyzes the formation of acetyl phosphate from acetate and ATP. Can also catalyze the reverse reaction. This chain is Acetate kinase, found in Borrelia duttonii (strain Ly).